Here is a 447-residue protein sequence, read N- to C-terminus: Phosphoglucosamine mutase (447 aa).

Catalysis depends on Ser-100, which acts as the Phosphoserine intermediate. Mg(2+) is bound by residues Ser-100, Asp-240, Asp-242, and Asp-244. Position 100 is a phosphoserine (Ser-100).

Belongs to the phosphohexose mutase family. Mg(2+) serves as cofactor. In terms of processing, activated by phosphorylation.

It catalyses the reaction alpha-D-glucosamine 1-phosphate = D-glucosamine 6-phosphate. Its function is as follows. Catalyzes the conversion of glucosamine-6-phosphate to glucosamine-1-phosphate. This chain is Phosphoglucosamine mutase, found in Clostridium botulinum (strain Alaska E43 / Type E3).